The chain runs to 489 residues: Glutamate--tRNA ligase (489 aa).

The 'HIGH' region motif lies at 11–21 (PSPTGHLHIGG). The Zn(2+) site is built by Cys108, Cys110, Cys136, and His138. Positions 253–257 (KLSKR) match the 'KMSKS' region motif. An ATP-binding site is contributed by Lys256.

The protein belongs to the class-I aminoacyl-tRNA synthetase family. Glutamate--tRNA ligase type 1 subfamily. In terms of assembly, monomer. Zn(2+) is required as a cofactor.

The protein localises to the cytoplasm. The enzyme catalyses tRNA(Glu) + L-glutamate + ATP = L-glutamyl-tRNA(Glu) + AMP + diphosphate. Functionally, catalyzes the attachment of glutamate to tRNA(Glu) in a two-step reaction: glutamate is first activated by ATP to form Glu-AMP and then transferred to the acceptor end of tRNA(Glu). The chain is Glutamate--tRNA ligase from Geobacillus thermodenitrificans (strain NG80-2).